The following is a 368-amino-acid chain: Phospho-N-acetylmuramoyl-pentapeptide-transferase (368 aa).

Transmembrane regions (helical) follow at residues 34–54 (GAVV…IDHL), 79–99 (TPTM…VLWA), 102–122 (LNPY…VGFY), 140–160 (ARIL…VRLG), 176–196 (LVIK…VGAG), 207–227 (GLAI…AYLA), 247–267 (LAVL…FNAP), 271–291 (IFMG…IAVA), 296–316 (IVLA…IVQV), and 345–365 (QIVI…LSTL).

This sequence belongs to the glycosyltransferase 4 family. MraY subfamily. Mg(2+) serves as cofactor.

The protein localises to the cell inner membrane. The catalysed reaction is UDP-N-acetyl-alpha-D-muramoyl-L-alanyl-gamma-D-glutamyl-meso-2,6-diaminopimeloyl-D-alanyl-D-alanine + di-trans,octa-cis-undecaprenyl phosphate = di-trans,octa-cis-undecaprenyl diphospho-N-acetyl-alpha-D-muramoyl-L-alanyl-D-glutamyl-meso-2,6-diaminopimeloyl-D-alanyl-D-alanine + UMP. It participates in cell wall biogenesis; peptidoglycan biosynthesis. Catalyzes the initial step of the lipid cycle reactions in the biosynthesis of the cell wall peptidoglycan: transfers peptidoglycan precursor phospho-MurNAc-pentapeptide from UDP-MurNAc-pentapeptide onto the lipid carrier undecaprenyl phosphate, yielding undecaprenyl-pyrophosphoryl-MurNAc-pentapeptide, known as lipid I. The chain is Phospho-N-acetylmuramoyl-pentapeptide-transferase from Bradyrhizobium sp. (strain BTAi1 / ATCC BAA-1182).